The chain runs to 735 residues: Coiled-coil quantitatively-enriched protein 1 (735 aa).

Positions 514-719 (AAVQYLQRRL…TLKILEQKSL (206 aa)) form a coiled coil.

As to quaternary structure, interacts (during meiosis) with pcp1. Interacts with clr3, pot1, taz1 and tpz1.

Its subcellular location is the nucleus. The protein resides in the nucleoplasm. It localises to the chromosome. It is found in the telomere. In terms of biological role, component of the meiotic bouquet that facilitates meiotic nuclear reorganization of the telomeres to the centrosome. Links telomeres to the meiotic centrosome component pcp1. Essential for the formation of normal telomere clusters during meiotic prophase. Required for telomere length regulation and chromosome segregation. Required for proper positioning of nucleosomes at heterochromatic loci and for transcriptional gene silencing (TGS) function of the Snf2/Hdac-containing repressor complex (SHREC). The chain is Coiled-coil quantitatively-enriched protein 1 (ccq1) from Schizosaccharomyces pombe (strain 972 / ATCC 24843) (Fission yeast).